A 527-amino-acid chain; its full sequence is Ankyrin repeat domain-containing protein 42 (527 aa).

The tract at residues 1–27 (MPGVANPGPSKSRRETADSSSRKKVHF) is disordered. Over residues 12–21 (SRRETADSSS) the composition is skewed to basic and acidic residues. ANK repeat units lie at residues 25–54 (VHFS…NLNE), 59–88 (HQFT…DATQ), 92–121 (RGWT…NLAT), 125–154 (RGCT…DPSV), 158–187 (REWK…GIED), 191–220 (NGNL…SATQ), 228–257 (NGEN…EGSH), 263–293 (DLAF…NLNE), 297–326 (NGST…ESNI), and 330–360 (AGET…EIDD). The stretch at 395-484 (NARMRAHKKI…ETLQKIQVTS (90 aa)) forms a coiled coil.

This chain is Ankyrin repeat domain-containing protein 42 (Ankrd42), found in Mus musculus (Mouse).